Reading from the N-terminus, the 251-residue chain is Triosephosphate isomerase (251 aa).

9 to 11 (NWK) contacts substrate. Catalysis depends on H95, which acts as the Electrophile. The Proton acceptor role is filled by E167. Residues G173, S212, and 233–234 (GG) each bind substrate.

This sequence belongs to the triosephosphate isomerase family. Homodimer.

The protein localises to the cytoplasm. The enzyme catalyses D-glyceraldehyde 3-phosphate = dihydroxyacetone phosphate. It participates in carbohydrate biosynthesis; gluconeogenesis. It functions in the pathway carbohydrate degradation; glycolysis; D-glyceraldehyde 3-phosphate from glycerone phosphate: step 1/1. Functionally, involved in the gluconeogenesis. Catalyzes stereospecifically the conversion of dihydroxyacetone phosphate (DHAP) to D-glyceraldehyde-3-phosphate (G3P). This is Triosephosphate isomerase from Pseudomonas aeruginosa (strain LESB58).